Here is a 388-residue protein sequence, read N- to C-terminus: Chorismate synthase (388 aa).

Residues R39 and R45 each contribute to the NADP(+) site. Residues 130 to 132 (RSS), 251 to 252 (NA), G296, 311 to 315 (KPIPT), and R337 contribute to the FMN site.

The protein belongs to the chorismate synthase family. Homotetramer. Requires FMNH2 as cofactor.

The catalysed reaction is 5-O-(1-carboxyvinyl)-3-phosphoshikimate = chorismate + phosphate. It functions in the pathway metabolic intermediate biosynthesis; chorismate biosynthesis; chorismate from D-erythrose 4-phosphate and phosphoenolpyruvate: step 7/7. Catalyzes the anti-1,4-elimination of the C-3 phosphate and the C-6 proR hydrogen from 5-enolpyruvylshikimate-3-phosphate (EPSP) to yield chorismate, which is the branch point compound that serves as the starting substrate for the three terminal pathways of aromatic amino acid biosynthesis. This reaction introduces a second double bond into the aromatic ring system. The protein is Chorismate synthase of Streptococcus pyogenes serotype M12 (strain MGAS2096).